Reading from the N-terminus, the 249-residue chain is Uridylate kinase (249 aa).

Residue 16 to 19 (KLSG) coordinates ATP. Residue Gly57 coordinates UMP. 2 residues coordinate ATP: Gly58 and Arg62. UMP-binding positions include Asp77 and 138–145 (AGMPYFST). Positions 166, 172, and 175 each coordinate ATP.

Belongs to the UMP kinase family. In terms of assembly, homohexamer.

It localises to the cytoplasm. The enzyme catalyses UMP + ATP = UDP + ADP. It functions in the pathway pyrimidine metabolism; CTP biosynthesis via de novo pathway; UDP from UMP (UMPK route): step 1/1. Inhibited by UTP. Functionally, catalyzes the reversible phosphorylation of UMP to UDP. This chain is Uridylate kinase, found in Bifidobacterium adolescentis (strain ATCC 15703 / DSM 20083 / NCTC 11814 / E194a).